A 557-amino-acid polypeptide reads, in one-letter code: Urocanate hydratase (557 aa).

NAD(+)-binding positions include 53–54, Q131, 177–179, E197, R202, 243–244, 264–268, 274–275, and Y323; these read GG, GMG, NA, QTSAH, and YL. Residue C411 is part of the active site. Residue G493 coordinates NAD(+).

The protein belongs to the urocanase family. Requires NAD(+) as cofactor.

The protein resides in the cytoplasm. It catalyses the reaction 4-imidazolone-5-propanoate = trans-urocanate + H2O. It participates in amino-acid degradation; L-histidine degradation into L-glutamate; N-formimidoyl-L-glutamate from L-histidine: step 2/3. Functionally, catalyzes the conversion of urocanate to 4-imidazolone-5-propionate. The polypeptide is Urocanate hydratase (Pseudomonas entomophila (strain L48)).